The following is a 439-amino-acid chain: Ribosomal protein uS12 methylthiotransferase RimO (439 aa).

Residues 4–114 enclose the MTTase N-terminal domain; sequence PKVGFVSLGR…VVRAVHGVAP (111 aa). A Radical SAM core domain is found at 133–370; it reads LTPRHYAYLK…MEHQQAISTA (238 aa). [4Fe-4S] cluster contacts are provided by Cys147, Cys151, and Cys154. The 67-residue stretch at 373–439 folds into the TRAM domain; that stretch reads STRVGREIDV…EYDLWGERIA (67 aa).

This sequence belongs to the methylthiotransferase family. RimO subfamily. Requires [4Fe-4S] cluster as cofactor.

Its subcellular location is the cytoplasm. The catalysed reaction is L-aspartate(89)-[ribosomal protein uS12]-hydrogen + (sulfur carrier)-SH + AH2 + 2 S-adenosyl-L-methionine = 3-methylsulfanyl-L-aspartate(89)-[ribosomal protein uS12]-hydrogen + (sulfur carrier)-H + 5'-deoxyadenosine + L-methionine + A + S-adenosyl-L-homocysteine + 2 H(+). Catalyzes the methylthiolation of an aspartic acid residue of ribosomal protein uS12. The protein is Ribosomal protein uS12 methylthiotransferase RimO of Bordetella bronchiseptica (strain ATCC BAA-588 / NCTC 13252 / RB50) (Alcaligenes bronchisepticus).